The chain runs to 1131 residues: Phytochrome B1 (1131 aa).

Basic residues predominate over residues 1 to 11; the sequence is MASGSRTKHSY. The tract at residues 1–26 is disordered; the sequence is MASGSRTKHSYHNSSQGQAQSSGTSN. Positions 14–25 are enriched in low complexity; it reads SSQGQAQSSGTS. The region spanning 229–408 is the GAF domain; it reads DIKLLCDTVV…AFGLQLNMEL (180 aa). Cys334 contributes to the phytochromobilin binding site. 2 PAS domains span residues 622–693 and 756–808; these read VARE…LRGV and DYKA…GEIF. The 221-residue stretch at 904–1124 folds into the Histidine kinase domain; it reads YICQEVKSPL…MIILDLPMTR (221 aa).

It belongs to the phytochrome family. As to quaternary structure, homodimer. In terms of processing, contains one covalently linked phytochromobilin chromophore.

Its function is as follows. Regulatory photoreceptor which exists in two forms that are reversibly interconvertible by light: the Pr form that absorbs maximally in the red region of the spectrum and the Pfr form that absorbs maximally in the far-red region. Photoconversion of Pr to Pfr induces an array of morphogenic responses, whereas reconversion of Pfr to Pr cancels the induction of those responses. Pfr controls the expression of a number of nuclear genes including those encoding the small subunit of ribulose-bisphosphate carboxylase, chlorophyll A/B binding protein, protochlorophyllide reductase, rRNA, etc. It also controls the expression of its own gene(s) in a negative feedback fashion. The sequence is that of Phytochrome B1 from Solanum lycopersicum (Tomato).